A 603-amino-acid polypeptide reads, in one-letter code: NADH-ubiquinone oxidoreductase chain 5 (603 aa).

Helical transmembrane passes span tyrosine 4–valine 24, valine 36–phenylalanine 56, methionine 87–tyrosine 107, leucine 122–isoleucine 142, alanine 171–leucine 191, leucine 211–leucine 233, threonine 241–isoleucine 261, leucine 272–alanine 292, isoleucine 301–asparagine 320, alanine 325–isoleucine 347, serine 370–tyrosine 390, alanine 406–tyrosine 422, leucine 488–threonine 508, and methionine 583–valine 603.

This sequence belongs to the complex I subunit 5 family. Core subunit of respiratory chain NADH dehydrogenase (Complex I) which is composed of 45 different subunits.

It is found in the mitochondrion inner membrane. It carries out the reaction a ubiquinone + NADH + 5 H(+)(in) = a ubiquinol + NAD(+) + 4 H(+)(out). Core subunit of the mitochondrial membrane respiratory chain NADH dehydrogenase (Complex I) which catalyzes electron transfer from NADH through the respiratory chain, using ubiquinone as an electron acceptor. Essential for the catalytic activity and assembly of complex I. This is NADH-ubiquinone oxidoreductase chain 5 (MT-ND5) from Papio hamadryas (Hamadryas baboon).